A 292-amino-acid chain; its full sequence is Ribonuclease T2-like (292 aa).

Residues methionine 1–alanine 23 form the signal peptide. 5 disulfide bridges follow: cysteine 42–cysteine 61, cysteine 50–cysteine 103, cysteine 60–cysteine 177, cysteine 111–cysteine 169, and cysteine 246–cysteine 280. The N-linked (GlcNAc...) asparagine glycan is linked to asparagine 52. Catalysis depends on residues histidine 96, glutamate 162, and histidine 166.

The protein belongs to the RNase T2 family.

It localises to the vacuole lumen. It is found in the cytoplasm. It carries out the reaction a ribonucleotidyl-ribonucleotide-RNA + H2O = a 3'-end 3'-phospho-ribonucleotide-RNA + a 5'-end dephospho-ribonucleoside-RNA + H(+). Rnase which modulates cell survival under stress conditions. Released from the vacuole to the cytoplasm during stress to promote tRNA and rRNA cleavage and to activate separately a downstream pathway that promotes cell death. Involved in cell size, vacuolar morphology and growth at high temperatures and high salt concentration. The protein is Ribonuclease T2-like (RNY1) of Eremothecium gossypii (strain ATCC 10895 / CBS 109.51 / FGSC 9923 / NRRL Y-1056) (Yeast).